The chain runs to 346 residues: Galanin receptor type 1 (346 aa).

At 1–33 (MELAPVNLSEGNGSDPEPPAEPRPLFGIGVENF) the chain is on the extracellular side. 2 N-linked (GlcNAc...) asparagine glycosylation sites follow: N7 and N12. The helical transmembrane segment at 34–54 (ITLVVFGLIFAMGVLGNSLVI) threads the bilayer. Residues 55–69 (TVLARSKPGKPRSTT) are Cytoplasmic-facing. The chain crosses the membrane as a helical span at residues 70 to 90 (NLFILNLSIADLAYLLFCIPF). Over 91–108 (QATVYALPTWVLGAFICK) the chain is Extracellular. C107 and C185 are disulfide-bonded. A helical transmembrane segment spans residues 109 to 130 (FIHYFFTVSMLVSIFTLAAMSV). Residues 131-150 (DRYVAIVHSRRSSSLRVSRN) are Cytoplasmic-facing. A helical transmembrane segment spans residues 151–171 (ALLGVGFIWALSIAMASPVAY). Over 172 to 196 (YQRLFHRDSNQTFCWEHWPNQLHKK) the chain is Extracellular. N181 carries N-linked (GlcNAc...) asparagine glycosylation. Residues 197 to 217 (AYVVCTFVFGYLLPLLLICFC) traverse the membrane as a helical segment. Over 218 to 246 (YAKVLNHLHKKLKNMSKKSEASKKKTAQT) the chain is Cytoplasmic. The chain crosses the membrane as a helical span at residues 247 to 267 (VLVVVVVFGISWLPHHVIHLW). The Extracellular segment spans residues 268–269 (AE). The helical transmembrane segment at 270–290 (FGAFPLTPASFFFRITAHCLA) threads the bilayer. Over 291–346 (YSNSSVNPIIYAFLSENFRKAYKQVFKCRVCNESPHGDAKEKNRIDTPPSTNCTHV) the chain is Cytoplasmic. C318 carries S-palmitoyl cysteine lipidation. Residues 326-335 (HGDAKEKNRI) are compositionally biased toward basic and acidic residues. Residues 326–346 (HGDAKEKNRIDTPPSTNCTHV) are disordered.

The protein belongs to the G-protein coupled receptor 1 family. In terms of assembly, interacts with GRP39 AND HTR1A. In terms of processing, three cysteine residues are found in the C-terminus, at least one of which may be palmitoylated. Spinal cord, small intestine, Rin14B insulinoma cells and several brain regions, particularly ventral hippocampus, amygdala, supraoptic nucleus, hypothalamus, thalamus, lateral parabrachial nucleus and locus coeruleus.

Its subcellular location is the cell membrane. Functionally, receptor for the hormone galanin. The activity of this receptor is mediated by G proteins that inhibit adenylate cyclase activity. The protein is Galanin receptor type 1 (Galr1) of Rattus norvegicus (Rat).